The chain runs to 217 residues: Somatotropin (217 aa).

The first 27 residues, 1 to 27 (MMAAGPRTSLLLAFALLCLPWTQMVGA), serve as a signal peptide directing secretion. His46 provides a ligand contact to Zn(2+). A disulfide bridge links Cys79 with Cys190. Phosphoserine is present on Ser132. Glu199 serves as a coordination point for Zn(2+). Residues Cys207 and Cys215 are joined by a disulfide bond.

Belongs to the somatotropin/prolactin family.

The protein resides in the secreted. Plays an important role in growth control. Its major role in stimulating body growth is to stimulate the liver and other tissues to secrete IGF1. It stimulates both the differentiation and proliferation of myoblasts. It also stimulates amino acid uptake and protein synthesis in muscle and other tissues. The polypeptide is Somatotropin (GH1) (Giraffa camelopardalis (Giraffe)).